A 197-amino-acid polypeptide reads, in one-letter code: Segregation and condensation protein B (197 aa).

Belongs to the ScpB family. As to quaternary structure, homodimer. Homodimerization may be required to stabilize the binding of ScpA to the Smc head domains. Component of a cohesin-like complex composed of ScpA, ScpB and the Smc homodimer, in which ScpA and ScpB bind to the head domain of Smc. The presence of the three proteins is required for the association of the complex with DNA.

It localises to the cytoplasm. In terms of biological role, participates in chromosomal partition during cell division. May act via the formation of a condensin-like complex containing Smc and ScpA that pull DNA away from mid-cell into both cell halves. This Malacoplasma penetrans (strain HF-2) (Mycoplasma penetrans) protein is Segregation and condensation protein B.